A 532-amino-acid chain; its full sequence is uncharacterized protein (532 aa).

Disordered stretches follow at residues 26-84, 97-129, and 157-470; these read KALR…TDSE, VFDESVSSDTDSEESHEEKRILPLGTPGQQVGR, and SKAA…HTCQ. Over residues 30–40 the composition is skewed to low complexity; that stretch reads GNNNGSSTSGG. The segment covering 67-80 has biased composition (polar residues); the sequence is DIISQARRQVSLSR. Over residues 157–181 the composition is skewed to basic and acidic residues; sequence SKAAGEESKRHAHFESIQEEEKISE. Residues 198 to 213 are compositionally biased toward low complexity; the sequence is IQSGSESSDSDSIIFD. The span at 237–249 shows a compositional bias: basic and acidic residues; it reads VEKKIEKPAVKEQ. Composition is skewed to low complexity over residues 259-290, 298-315, and 326-335; these read PTPTESSFESSSDSSSTSESSTSSESSSSASE, ESQVSSSKTSTSKASSSK, and SSSSSASTIS. The span at 347-356 shows a compositional bias: basic residues; that stretch reads KTKKPDKKRA. Composition is skewed to basic and acidic residues over residues 357 to 368, 389 to 403, 410 to 419, and 437 to 448; these read KPDDIRQNKKPE, STVRETNRTLEESLK, KSSEKMEKPR, and RDAEREQDIERR. A compositionally biased stretch (basic residues) spans 449–461; that stretch reads REKRARRFRSRRR.

This is an uncharacterized protein from Caenorhabditis elegans.